The primary structure comprises 33 residues: MSDIN-like toxin proprotein 5 (33 aa).

Residues 1 to 10 (MSDINATRLP) constitute a propeptide that is removed on maturation. The segment at residues 11–18 (IFWFIYFP) is a cross-link (cyclopeptide (Ile-Pro)). The propeptide occupies 19 to 32 (CVGDNVDNTLTRGE).

This sequence belongs to the MSDIN fungal toxin family. In terms of processing, processed by the macrocyclase-peptidase enzyme POPB to yield a toxic cyclic octapeptide. POPB first removes 10 residues from the N-terminus. Conformational trapping of the remaining peptide forces the enzyme to release this intermediate rather than proceed to macrocyclization. The enzyme rebinds the remaining peptide in a different conformation and catalyzes macrocyclization of the N-terminal 8 residues.

In terms of biological role, probable toxin that belongs to the MSDIN-like toxin family responsible for a large number of food poisoning cases and deaths. This Amanita phalloides (Death cap) protein is MSDIN-like toxin proprotein 5.